Here is a 409-residue protein sequence, read N- to C-terminus: Transcriptional regulator GME11370 (409 aa).

The zn(2)-C6 fungal-type DNA-binding region spans 17–44; it reads CHACAASKLKCSKEKPSCARCLKRNKPC. The interval 49-83 is disordered; it reads TRRAGRHHGSRSKKVPTISPASAPEPQPFSTTPPD. Residues 51–62 are compositionally biased toward basic residues; it reads RAGRHHGSRSKK.

The protein resides in the nucleus. Transcriptional regulator; part of the gene cluster that mediates the biosynthesis of dibenzodioxocinones such as pestalotiollide B, a novel class of inhibitors against cholesterol ester transfer protein (CEPT). The sequence is that of Transcriptional regulator GME11370 from Pestalotiopsis microspora.